We begin with the raw amino-acid sequence, 450 residues long: UDP-N-acetylmuramoylalanine--D-glutamate ligase (450 aa).

119 to 125 (GSNGKTT) is a binding site for ATP.

It belongs to the MurCDEF family.

The protein resides in the cytoplasm. The enzyme catalyses UDP-N-acetyl-alpha-D-muramoyl-L-alanine + D-glutamate + ATP = UDP-N-acetyl-alpha-D-muramoyl-L-alanyl-D-glutamate + ADP + phosphate + H(+). Its pathway is cell wall biogenesis; peptidoglycan biosynthesis. Its function is as follows. Cell wall formation. Catalyzes the addition of glutamate to the nucleotide precursor UDP-N-acetylmuramoyl-L-alanine (UMA). The chain is UDP-N-acetylmuramoylalanine--D-glutamate ligase from Streptococcus pneumoniae (strain ATCC BAA-255 / R6).